The chain runs to 325 residues: tRNA U34 carboxymethyltransferase (325 aa).

Residues Lys-91, Trp-105, Lys-110, Gly-130, 152-154 (DPS), 181-182 (ME), Met-197, Tyr-201, and Arg-316 each bind carboxy-S-adenosyl-L-methionine.

It belongs to the class I-like SAM-binding methyltransferase superfamily. CmoB family. As to quaternary structure, homotetramer.

The catalysed reaction is carboxy-S-adenosyl-L-methionine + 5-hydroxyuridine(34) in tRNA = 5-carboxymethoxyuridine(34) in tRNA + S-adenosyl-L-homocysteine + H(+). Functionally, catalyzes carboxymethyl transfer from carboxy-S-adenosyl-L-methionine (Cx-SAM) to 5-hydroxyuridine (ho5U) to form 5-carboxymethoxyuridine (cmo5U) at position 34 in tRNAs. In Saccharophagus degradans (strain 2-40 / ATCC 43961 / DSM 17024), this protein is tRNA U34 carboxymethyltransferase.